The primary structure comprises 217 residues: Phosphoribosylformylglycinamidine synthase subunit PurQ (217 aa).

Residues 2 to 217 form the Glutamine amidotransferase type-1 domain; that stretch reads SIGVLVFPGS…GRVLLQGLLS (216 aa). C86 (nucleophile) is an active-site residue. Active-site residues include H194 and E196.

As to quaternary structure, part of the FGAM synthase complex composed of 1 PurL, 1 PurQ and 2 PurS subunits.

It localises to the cytoplasm. It catalyses the reaction N(2)-formyl-N(1)-(5-phospho-beta-D-ribosyl)glycinamide + L-glutamine + ATP + H2O = 2-formamido-N(1)-(5-O-phospho-beta-D-ribosyl)acetamidine + L-glutamate + ADP + phosphate + H(+). The enzyme catalyses L-glutamine + H2O = L-glutamate + NH4(+). Its pathway is purine metabolism; IMP biosynthesis via de novo pathway; 5-amino-1-(5-phospho-D-ribosyl)imidazole from N(2)-formyl-N(1)-(5-phospho-D-ribosyl)glycinamide: step 1/2. Functionally, part of the phosphoribosylformylglycinamidine synthase complex involved in the purines biosynthetic pathway. Catalyzes the ATP-dependent conversion of formylglycinamide ribonucleotide (FGAR) and glutamine to yield formylglycinamidine ribonucleotide (FGAM) and glutamate. The FGAM synthase complex is composed of three subunits. PurQ produces an ammonia molecule by converting glutamine to glutamate. PurL transfers the ammonia molecule to FGAR to form FGAM in an ATP-dependent manner. PurS interacts with PurQ and PurL and is thought to assist in the transfer of the ammonia molecule from PurQ to PurL. The polypeptide is Phosphoribosylformylglycinamidine synthase subunit PurQ (Parasynechococcus marenigrum (strain WH8102)).